A 652-amino-acid chain; its full sequence is Beta-glucuronidase (652 aa).

Residues 1 to 22 (MVRGPAGAWAVLGPLLWGCGLA) form the signal peptide. 2 N-linked (GlcNAc...) asparagine glycosylation sites follow: Asn-173 and Asn-420. The Proton donor role is filled by Glu-451. A glycan (N-linked (GlcNAc...) asparagine) is linked at Asn-631.

Belongs to the glycosyl hydrolase 2 family. In terms of assembly, homotetramer.

The protein resides in the lysosome. The catalysed reaction is a beta-D-glucuronoside + H2O = D-glucuronate + an alcohol. Its activity is regulated as follows. Inhibited by L-aspartic acid. Plays an important role in the degradation of dermatan and keratan sulfates. This Sus scrofa (Pig) protein is Beta-glucuronidase (GUSB).